Here is a 544-residue protein sequence, read N- to C-terminus: Glycoprotein gp100 (544 aa).

An N-terminal signal peptide occupies residues 1-19; sequence MKNFILLVFLFLLVSNSLG. The Extracellular portion of the chain corresponds to 20-489; that stretch reads KSNKKDDQSP…SGGGGNKKLY (470 aa). N-linked (GlcNAc...) asparagine glycosylation occurs at asparagine 80. Residues 84–99 show a composition bias toward polar residues; that stretch reads EPQNNPIPTVSINPDQ. Residues 84-215 form a disordered region; sequence EPQNNPIPTV…TPTRPSSSVS (132 aa). 3 stretches are compositionally biased toward low complexity: residues 126-142, 150-165, and 189-199; these read SKPT…TIPP, PQTT…TPTP, and PKPTKSSKPTK. Asparagine 224, asparagine 308, asparagine 332, asparagine 366, asparagine 380, asparagine 410, asparagine 422, and asparagine 478 each carry an N-linked (GlcNAc...) asparagine glycan. Residues 444-480 form a disordered region; that stretch reads KPSTTDDDNNKNNDDGDSEIDSVGKSAVDSSKSNNNS. Residues 490–510 form a helical membrane-spanning segment; the sequence is LLIILPTVLFIIVAALVAIFI. Residues 511–544 lie on the Cytoplasmic side of the membrane; sequence KTRVSQNSGSKVNKNNNKKDSINVPFQMLDEITT.

N- and O-glycosylated.

The protein localises to the membrane. The polypeptide is Glycoprotein gp100 (gppA) (Dictyostelium discoideum (Social amoeba)).